The following is a 1243-amino-acid chain: Serine/threonine-protein kinase WNK4 (1243 aa).

Residues methionine 1–glutamate 17 are compositionally biased toward polar residues. The tract at residues methionine 1–valine 142 is disordered. Residues valine 65 to alanine 77 are compositionally biased toward low complexity. A compositionally biased stretch (pro residues) spans serine 78–lysine 103. Serine 97 carries the post-translational modification Phosphoserine. Residues alanine 118 to leucine 127 are compositionally biased toward basic and acidic residues. Glycyl lysine isopeptide (Lys-Gly) (interchain with G-Cter in ubiquitin) cross-links involve residues lysine 157 and lysine 175. In terms of domain architecture, Protein kinase spans leucine 174–phenylalanine 432. Serine 184 contributes to the ATP binding site. Glycyl lysine isopeptide (Lys-Gly) (interchain with G-Cter in ubiquitin) cross-links involve residues lysine 186, lysine 226, and lysine 241. Residues threonine 254–methionine 257 and lysine 304 each bind ATP. The active-site Proton acceptor is aspartate 321. Lysine 328 is covalently cross-linked (Glycyl lysine isopeptide (Lys-Gly) (interchain with G-Cter in ubiquitin)). Residues serine 331 and serine 335 each carry the phosphoserine; by autocatalysis modification. Residues lysine 387, lysine 393, lysine 450, and lysine 454 each participate in a glycyl lysine isopeptide (Lys-Gly) (interchain with G-Cter in ubiquitin) cross-link. Residues lysine 526–aspartate 564 form a disordered region. Residues proline 534–proline 556 show a composition bias toward pro residues. Residues glutamate 557–glutamine 567 form an interaction with KLHL3 region. At serine 575 the chain carries Phosphoserine. Positions serine 630–serine 641 are enriched in low complexity. Disordered regions lie at residues serine 630–aspartate 683, aspartate 751–glutamate 871, and serine 943–tryptophan 1110. The span at proline 663–leucine 676 shows a compositional bias: basic residues. The segment covering glutamate 767 to aspartate 780 has biased composition (pro residues). Over residues tryptophan 797–serine 812 the composition is skewed to low complexity. The span at proline 822 to phenylalanine 843 shows a compositional bias: pro residues. Low complexity-rich tracts occupy residues serine 844–proline 854, proline 862–glutamate 871, and serine 943–serine 952. Residues proline 953–alanine 970 are compositionally biased toward pro residues. A Glycyl lysine isopeptide (Lys-Gly) (interchain with G-Cter in ubiquitin) cross-link involves residue lysine 1010. Residues arginine 1016–valine 1019 carry the RFXV motif motif. A Phosphoserine modification is found at serine 1035. Residues glutamate 1065–alanine 1077 show a composition bias toward basic and acidic residues. Residues lysine 1144, lysine 1157, and lysine 1158 each participate in a glycyl lysine isopeptide (Lys-Gly) (interchain with G-Cter in ubiquitin) cross-link. A disordered region spans residues arginine 1166–methionine 1243. 2 stretches are compositionally biased toward polar residues: residues serine 1193–arginine 1204 and asparagine 1216–glutamine 1228. A Phosphoserine modification is found at serine 1217.

The protein belongs to the protein kinase superfamily. Ser/Thr protein kinase family. WNK subfamily. In terms of assembly, interacts with the C-terminal region of KCNJ1. Requires Mg(2+) as cofactor. Post-translationally, autophosphorylated at Ser-331 and Ser-335, promoting its activation. Phosphorylated by WNK1 and WNK3. Phosphorylated at Ser-575 in a MAP3K15/ASK3-dependent process in response to osmotic stress or hypotonic low-chloride stimulation. In terms of processing, ubiquitinated by the BCR(KLHL3) complex, leading to its degradation. Also ubiquitinated by the BCR(KLHL2) complex. As to expression, expressed in kidney, colon and skin.

The protein resides in the cell junction. It is found in the tight junction. The enzyme catalyses L-seryl-[protein] + ATP = O-phospho-L-seryl-[protein] + ADP + H(+). It carries out the reaction L-threonyl-[protein] + ATP = O-phospho-L-threonyl-[protein] + ADP + H(+). Activation requires autophosphorylation of Ser-331 and Ser-335. Autophosphorylation and subsequent activation is inhibited by increases in intracellular ionic strength: Cl(-) potently inhibits WNK4 kinase activity via direct binding. Also inhibited by K(+) ions. In terms of biological role, serine/threonine-protein kinase component of the WNK4-SPAK/OSR1 kinase cascade, which acts as a key regulator of ion transport in the distal nephron and blood pressure. The WNK4-SPAK/OSR1 kinase cascade is composed of WNK4, which mediates phosphorylation and activation of downstream kinases OXSR1/OSR1 and STK39/SPAK. Following activation, OXSR1/OSR1 and STK39/SPAK catalyze phosphorylation of ion cotransporters, such as SLC12A1/NKCC2, SLC12A2/NKCC1, SLC12A3/NCC, SLC12A5/KCC2 or SLC12A6/KCC3, regulating their activity. Acts as a molecular switch that regulates the balance between renal salt reabsorption and K(+) secretion by modulating the activities of renal transporters and channels, including the Na-Cl cotransporter SLC12A3/NCC and the K(+) channel, KCNJ1/ROMK. Regulates NaCl reabsorption in the distal nephron by activating the thiazide-sensitive Na-Cl cotransporter SLC12A3/NCC in distal convoluted tubule cells of kidney: activates SLC12A3/NCC in a OXSR1/OSR1- and STK39/SPAK-dependent process. Also acts as a scaffold protein independently of its protein kinase activity: negatively regulates cell membrane localization of various transporters and channels (CFTR, KCNJ1/ROMK, SLC4A4, SLC26A9 and TRPV4) by clathrin-dependent endocytosis. Also inhibits the activity of the epithelial Na(+) channel (ENaC) SCNN1A, SCNN1B, SCNN1D in a inase-independent mechanism. May also phosphorylate NEDD4L. The polypeptide is Serine/threonine-protein kinase WNK4 (Homo sapiens (Human)).